The sequence spans 692 residues: DNA ligase (692 aa).

Over residues 1-14 the composition is skewed to polar residues; the sequence is MQPDLFSTASQADA. A disordered region spans residues 1–27; it reads MQPDLFSTASQADANATPEEPDASNPA. Residues 54 to 58, 103 to 104, and Glu-134 each bind NAD(+); these read DAEYD and SL. Lys-136 (N6-AMP-lysine intermediate) is an active-site residue. NAD(+)-binding residues include Arg-157, Glu-194, Lys-311, and Lys-335. Zn(2+) is bound by residues Cys-429, Cys-432, Cys-447, and Cys-454. In terms of domain architecture, BRCT spans 612–692; it reads NKPKPFAGKT…ALLQLLDTHE (81 aa).

This sequence belongs to the NAD-dependent DNA ligase family. LigA subfamily. Mg(2+) is required as a cofactor. Mn(2+) serves as cofactor.

The catalysed reaction is NAD(+) + (deoxyribonucleotide)n-3'-hydroxyl + 5'-phospho-(deoxyribonucleotide)m = (deoxyribonucleotide)n+m + AMP + beta-nicotinamide D-nucleotide.. Its function is as follows. DNA ligase that catalyzes the formation of phosphodiester linkages between 5'-phosphoryl and 3'-hydroxyl groups in double-stranded DNA using NAD as a coenzyme and as the energy source for the reaction. It is essential for DNA replication and repair of damaged DNA. The sequence is that of DNA ligase from Janthinobacterium sp. (strain Marseille) (Minibacterium massiliensis).